Reading from the N-terminus, the 399-residue chain is 1-deoxy-D-xylulose 5-phosphate reductoisomerase (399 aa).

NADPH is bound by residues threonine 13, glycine 14, serine 15, isoleucine 16, and asparagine 127. A 1-deoxy-D-xylulose 5-phosphate-binding site is contributed by lysine 128. Glutamate 129 lines the NADPH pocket. Aspartate 153 provides a ligand contact to Mn(2+). 1-deoxy-D-xylulose 5-phosphate is bound by residues serine 154, glutamate 155, serine 187, and histidine 210. Residue glutamate 155 coordinates Mn(2+). Glycine 216 lines the NADPH pocket. Positions 223, 228, 229, and 232 each coordinate 1-deoxy-D-xylulose 5-phosphate. A Mn(2+)-binding site is contributed by glutamate 232.

The protein belongs to the DXR family. Mg(2+) is required as a cofactor. The cofactor is Mn(2+).

The catalysed reaction is 2-C-methyl-D-erythritol 4-phosphate + NADP(+) = 1-deoxy-D-xylulose 5-phosphate + NADPH + H(+). It participates in isoprenoid biosynthesis; isopentenyl diphosphate biosynthesis via DXP pathway; isopentenyl diphosphate from 1-deoxy-D-xylulose 5-phosphate: step 1/6. Functionally, catalyzes the NADPH-dependent rearrangement and reduction of 1-deoxy-D-xylulose-5-phosphate (DXP) to 2-C-methyl-D-erythritol 4-phosphate (MEP). In Bordetella parapertussis (strain 12822 / ATCC BAA-587 / NCTC 13253), this protein is 1-deoxy-D-xylulose 5-phosphate reductoisomerase.